Consider the following 642-residue polypeptide: Frizzled and smoothened-like protein B (642 aa).

The first 26 residues, 1–26 (MFNKNNNNNKIIIILKLFLIILIVNN), serve as a signal peptide directing secretion. The Extracellular portion of the chain corresponds to 27 to 264 (NNNIKTFGLN…KWHQMYNMSK (238 aa)). An FZ domain is found at 47–197 (DPTATCSNYI…GFFPVPCSDP (151 aa)). Cystine bridges form between Cys-52-Cys-123, Cys-65-Cys-116, and Cys-143-Cys-194. Asn-80, Asn-153, Asn-162, Asn-177, Asn-203, Asn-222, and Asn-261 each carry an N-linked (GlcNAc...) asparagine glycan. A helical transmembrane segment spans residues 265–285 (ILSTISFVCSIYNVLTFGILN). Residues 286–294 (HRRSKYNYC) are Cytoplasmic-facing. A helical transmembrane segment spans residues 295–315 (ITFFSASVIIITMMDIVTYGI). Topologically, residues 316–344 (GYEKLLCPEPGRFAVQSDVSCGATGALFH) are extracellular. A helical transmembrane segment spans residues 345–365 (IGITNGVFWWTTMSICLFAVV). At 366–375 (KRIKLFDFRY) the chain is on the cytoplasmic side. Residues 376–398 (FIIFNTTASLISVIIPLAGNAFM) form a helical membrane-spanning segment. The Extracellular segment spans residues 399–416 (AGTGSLACWIRKTWYVNS). A helical membrane pass occupies residues 417–437 (VFWIPCGIALTIGSVCIILVI). Residues 438–460 (YEIYKITKNVSTKDNRMILLQIK) lie on the Cytoplasmic side of the membrane. The chain crosses the membrane as a helical span at residues 461–481 (PFLCVTLVGGSFYYLFIFNFD). Asn-482 carries an N-linked (GlcNAc...) asparagine glycan. Residues 482–514 (NESHSKEYKEKVVDYVMCLLSDTGKECLMAGPN) lie on the Extracellular side of the membrane. A helical membrane pass occupies residues 515-535 (YVAYFVFYFFIRLFGITFFCI). Over 536–642 (YGTSQNARDI…INSASNTSSD (107 aa)) the chain is Cytoplasmic. Residues 578–642 (GTNPTSNSKN…INSASNTSSD (65 aa)) are disordered. Residues 583 to 598 (SNSKNSKNNQNNQNNN) are compositionally biased toward low complexity. Residues 584–611 (NSKNSKNNQNNQNNNSRKEFESKNIELE) adopt a coiled-coil conformation. Over residues 599–609 (SRKEFESKNIE) the composition is skewed to basic and acidic residues. Composition is skewed to polar residues over residues 614-623 (ESISKGQTTR) and 632-642 (NINSASNTSSD).

The protein belongs to the G-protein coupled receptor Fz/Smo family.

The protein resides in the membrane. The polypeptide is Frizzled and smoothened-like protein B (fslB) (Dictyostelium discoideum (Social amoeba)).